An 88-amino-acid polypeptide reads, in one-letter code: Small ribosomal subunit protein uS15 (88 aa).

It belongs to the universal ribosomal protein uS15 family. In terms of assembly, part of the 30S ribosomal subunit. Forms a bridge to the 50S subunit in the 70S ribosome, contacting the 23S rRNA.

Its function is as follows. One of the primary rRNA binding proteins, it binds directly to 16S rRNA where it helps nucleate assembly of the platform of the 30S subunit by binding and bridging several RNA helices of the 16S rRNA. Forms an intersubunit bridge (bridge B4) with the 23S rRNA of the 50S subunit in the ribosome. In Opitutus terrae (strain DSM 11246 / JCM 15787 / PB90-1), this protein is Small ribosomal subunit protein uS15.